A 331-amino-acid chain; its full sequence is Homeobox protein DBX1 (331 aa).

Disordered regions lie at residues 56–94 (RAVPPPSMSPPTSESPNCMSETSDLARREGPNQTSISSN) and 232–331 (KERE…ITVS). Residues 173–232 (GMLRRAVFSDVQRKALEKMFQKQKYISKPDRKKLAGKLGLKDSQVKIWFQNRRMKWRNSK) constitute a DNA-binding region (homeobox). Over residues 256-266 (DLSDVSKKSSG) the composition is skewed to basic and acidic residues. The segment covering 299-314 (PSSPFNSSSASKPSDF) has biased composition (low complexity). Residues 315–331 (SDSEEEGGEQEEEITVS) are compositionally biased toward acidic residues.

It belongs to the H2.0 homeobox family.

It is found in the nucleus. In terms of biological role, may function within the midpoint progenitor population to inhibit neuronal differentiation, possibly through modulating the function of Xash3. The sequence is that of Homeobox protein DBX1 (dbx1) from Xenopus laevis (African clawed frog).